The following is a 192-amino-acid chain: Fe/S biogenesis protein NfuA (192 aa).

2 residues coordinate [4Fe-4S] cluster: C149 and C152.

This sequence belongs to the NfuA family. In terms of assembly, homodimer. Requires [4Fe-4S] cluster as cofactor.

Its function is as follows. Involved in iron-sulfur cluster biogenesis. Binds a 4Fe-4S cluster, can transfer this cluster to apoproteins, and thereby intervenes in the maturation of Fe/S proteins. Could also act as a scaffold/chaperone for damaged Fe/S proteins. The sequence is that of Fe/S biogenesis protein NfuA from Aeromonas salmonicida (strain A449).